A 455-amino-acid polypeptide reads, in one-letter code: Angiopoietin-related protein 3 (455 aa).

The first 16 residues, 1-16 (MHTIKLFLFVVPLVIA), serve as a signal peptide directing secretion. A sufficient to inhibit LPL lipase activity region spans residues 17–165 (SRVDPDLSSF…QEHPEVTSLK (149 aa)). The sufficient to inhibit LIPG/EL phospholipase activity stretch occupies residues 17-207 (SRVDPDLSSF…EIEKQLRKTG (191 aa)). The required for inhibition of LPL lipase activity stretch occupies residues 32–56 (EPKSRFAMLDDVKILANGLLQLGHG). Residues 85–206 (LSLRTNEIKE…KEIEKQLRKT (122 aa)) are a coiled coil. Asn-115 carries N-linked (GlcNAc...) asparagine glycosylation. The tract at residues 202–242 (QLRKTGIQEPSENSLSSKSRAPRTTPPLQLNETENTEQDDL) is disordered. A compositionally biased stretch (polar residues) spans 209–220 (QEPSENSLSSKS). Thr-226 carries O-linked (GlcNAc) threonine glycosylation. Asn-232 carries an N-linked (GlcNAc...) asparagine glycan. In terms of domain architecture, Fibrinogen C-terminal spans 237-455 (TEQDDLPADC…SSKMMLQPTT (219 aa)). A disulfide bond links Cys-246 and Cys-274. 2 N-linked (GlcNAc...) asparagine glycosylation sites follow: Asn-296 and Asn-357. Cys-394 and Cys-408 are disulfide-bonded.

In terms of assembly, interacts with ANGPTL8. Interacts with ITGB3. In part proteolytically cleaved by proprotein convertases; proposed to be involved in activation. In primary hepatocytes is intracellularily predominantly processed by FURIN and extracellularily by FURIN and PCSK6/PACE4. In 18.5 dpc embryos 75% of protein is found to be processed compared to 25 % in adults. In terms of tissue distribution, predominantly expressed in liver, weakly expressed in kidney and lung. Expressed in podocytes (at protein level). Expressed in hypothalamic neurons (at protein level). Expressed in bone marrow sinusoidal endothelial cells (at protein level).

The protein localises to the secreted. The protein resides in the cell projection. Its subcellular location is the lamellipodium. Acts in part as a hepatokine that is involved in regulation of lipid and glucose metabolism. Proposed to play a role in the trafficking of energy substrates to either storage or oxidative tissues in response to food intake. Has a stimulatory effect on plasma triglycerides (TG), which is achieved by suppressing plasma TG clearance via inhibition of LPL activity; the function seems to be specific for the feeding conditions. The inhibition of LPL activity appears to be an indirect mechanism involving recruitment of proprotein convertases PCSK6 and FURIN to LPL leading to cleavage and dissociation of LPL from the cell surface; the function does not require ANGPTL3 proteolytic cleavage but seems to be mediated by the N-terminal domain, and is not inhibited by GPIHBP1. Can inhibit endothelial lipase, causing increased plasma levels of high density lipoprotein (HDL) cholesterol and phospholipids; the cleaved N-terminal domain is more efficient than the uncleaved proprotein. Can bind to adipocytes to activate lipolysis, releasing free fatty acids and glycerol. Suppresses LPL specifically in oxidative tissues which is required to route very low density lipoprotein (VLDL)-TG to white adipose tissue (WAT) for storage in response to food; the function may involve cooperation with circulating, liver-derived ANGPTL8 and ANGPTL4 expression in WAT. Contributes to lower plasma levels of low density lipoprotein (LDL)-cholesterol by a mechanism that is independent of the canonical pathway implicating APOE and LDLR. May stimulate hypothalamic LPL activity. Functionally, involved in angiogenesis. Binds to endothelial cells via integrin alpha-V/beta-3 (ITGAV:ITGB3), activates FAK, MAPK and Akt signaling pathways and induces cell adhesion and cell migration. May increase the motility of podocytes. Secreted from podocytes, may modulate properties of glomerular endothelial cells involving integrin alpha-V/beta-3 and Akt signaling. May induce actin filament rearrangements in podocytes implicating integrin alpha-V/beta-3 and Rac1 activation. Binds to hematopoietic stem cells (HSC) and is involved in the regulation of HSC activity probably implicating down-regulation of IKZF1/IKAROS. The protein is Angiopoietin-related protein 3 (Angptl3) of Mus musculus (Mouse).